A 108-amino-acid polypeptide reads, in one-letter code: Mitochondrial import inner membrane translocase subunit tim-13 (108 aa).

The Twin CX3C motif signature appears at 45–68 (CTNKCITAPGSSLASGEKQCLQRC). Cystine bridges form between C45/C68 and C49/C64. The segment at 89-108 (EEMASSGGMGGGFGQGPSFS) is disordered. The segment covering 95–108 (GGMGGGFGQGPSFS) has biased composition (gly residues).

Belongs to the small Tim family. Heterohexamer; composed of 3 copies of tim-8/ddp-1 and 3 copies of tin-13/tim-13, named soluble 70 kDa complex. Associates with the TIM22 complex, whose core is composed of tim-22.

It is found in the mitochondrion inner membrane. In terms of biological role, mitochondrial intermembrane chaperone that participates in the import and insertion of some multi-pass transmembrane proteins into the mitochondrial inner membrane. Also required for the transfer of beta-barrel precursors from the TOM complex to the sorting and assembly machinery (SAM complex) of the outer membrane. Acts as a chaperone-like protein that protects the hydrophobic precursors from aggregation and guide them through the mitochondrial intermembrane space. The tim-8-tim-13 complex mediates the import of some proteins while the predominant tim-9/tin-9.1-tim-10/tin-10 70 kDa complex mediates the import of much more proteins. This chain is Mitochondrial import inner membrane translocase subunit tim-13 (tin-13), found in Caenorhabditis elegans.